Reading from the N-terminus, the 632-residue chain is Extracellular metalloproteinase 2 (632 aa).

The N-terminal stretch at 1–19 is a signal peptide; the sequence is MHGLLLAGLAAALPLGVAG. Positions 20–244 are excised as a propeptide; sequence LPARQQSGLS…VHNVVDYVAS (225 aa). N270 is a glycosylation site (N-linked (GlcNAc...) asparagine). Residue H429 coordinates Zn(2+). The active site involves E430. Zn(2+) is bound at residue H433.

Belongs to the peptidase M36 family. It depends on Zn(2+) as a cofactor.

It is found in the secreted. Functionally, secreted metalloproteinase probably acting as a virulence factor. This Trichophyton rubrum (Athlete's foot fungus) protein is Extracellular metalloproteinase 2 (MEP2).